A 478-amino-acid chain; its full sequence is Putative response regulator NtrX-like (478 aa).

A Response regulatory domain is found at 5–121 (DVLIVDDEED…KLVILLKRAC (117 aa)). Asp-54 bears the 4-aspartylphosphate mark. The Sigma-54 factor interaction domain occupies 143 to 372 (LVGNSTITLK…LRNVVEWTLI (230 aa)). Residues 171–178 (GKVGSGKE) and 235–244 (ANNGTLYIDE) contribute to the ATP site.

In terms of biological role, member of the two-component regulatory system RBE_0312/RBE_0470. The protein is Putative response regulator NtrX-like of Rickettsia bellii (strain RML369-C).